The primary structure comprises 156 residues: D-aminoacyl-tRNA deacylase (156 aa).

The short motif at 142–143 is the Gly-cisPro motif, important for rejection of L-amino acids element; the sequence is GP.

It belongs to the DTD family. Homodimer.

The protein localises to the cytoplasm. The catalysed reaction is glycyl-tRNA(Ala) + H2O = tRNA(Ala) + glycine + H(+). The enzyme catalyses a D-aminoacyl-tRNA + H2O = a tRNA + a D-alpha-amino acid + H(+). Functionally, an aminoacyl-tRNA editing enzyme that deacylates mischarged D-aminoacyl-tRNAs. Also deacylates mischarged glycyl-tRNA(Ala), protecting cells against glycine mischarging by AlaRS. Acts via tRNA-based rather than protein-based catalysis; rejects L-amino acids rather than detecting D-amino acids in the active site. By recycling D-aminoacyl-tRNA to D-amino acids and free tRNA molecules, this enzyme counteracts the toxicity associated with the formation of D-aminoacyl-tRNA entities in vivo and helps enforce protein L-homochirality. This chain is D-aminoacyl-tRNA deacylase, found in Cupriavidus pinatubonensis (strain JMP 134 / LMG 1197) (Cupriavidus necator (strain JMP 134)).